The primary structure comprises 504 residues: Cytochrome P450 3A41 (504 aa).

Cysteine 443 contributes to the heme binding site.

The protein belongs to the cytochrome P450 family. It depends on heme as a cofactor. As to expression, expressed in liver. Also expressed in the kidneys of female mice, with traces in the stomach, ovary, and heart of female mice and in the testis of male mice.

The protein localises to the endoplasmic reticulum membrane. The protein resides in the microsome membrane. It carries out the reaction an organic molecule + reduced [NADPH--hemoprotein reductase] + O2 = an alcohol + oxidized [NADPH--hemoprotein reductase] + H2O + H(+). The chain is Cytochrome P450 3A41 (Cyp3a41a) from Mus musculus (Mouse).